The primary structure comprises 182 residues: Ribulose bisphosphate carboxylase small subunit, chloroplastic (182 aa).

The N-terminal 58 residues, 1 to 58 (MASSMISSATVATVSRATPAQATMVAPFTGLKSTAAFPATRKSNNDITSLASNGGRVQ), are a transit peptide targeting the chloroplast.

It belongs to the RuBisCO small chain family. Heterohexadecamer of 8 large and 8 small subunits.

The protein resides in the plastid. The protein localises to the chloroplast. Its function is as follows. RuBisCO catalyzes two reactions: the carboxylation of D-ribulose 1,5-bisphosphate, the primary event in carbon dioxide fixation, as well as the oxidative fragmentation of the pentose substrate. Both reactions occur simultaneously and in competition at the same active site. Although the small subunit is not catalytic it is essential for maximal activity. In Fagus crenata (Japanese beech), this protein is Ribulose bisphosphate carboxylase small subunit, chloroplastic.